Reading from the N-terminus, the 608-residue chain is Actin-related protein 8 (608 aa).

A disordered region spans residues 1–20 (MQRSRASSTSSGRLQASQQV). An ATP-binding site is contributed by 272–275 (DIGA).

This sequence belongs to the actin family. ARP8 subfamily. Component of the chromatin remodeling Ino80 complex. Exists as monomers and dimers, but the dimer is most probably the biologically relevant form required for stable interactions with histones that exploits the twofold symmetry of the nucleosome core.

It localises to the nucleus. Its function is as follows. Plays an important role in the functional organization of mitotic chromosomes. Exhibits low basal ATPase activity, and unable to polymerize. In terms of biological role, proposed core component of the chromatin remodeling INO80 complex which is involved in transcriptional regulation, DNA replication and probably DNA repair. Strongly prefer nucleosomes and H3-H4 tetramers over H2A-H2B dimers, suggesting it may act as a nucleosome recognition module within the complex. The chain is Actin-related protein 8 from Drosophila pseudoobscura pseudoobscura (Fruit fly).